A 100-amino-acid chain; its full sequence is Nucleoid-associated protein Cagg_3200 (100 aa).

The protein belongs to the YbaB/EbfC family. In terms of assembly, homodimer.

Its subcellular location is the cytoplasm. The protein resides in the nucleoid. Functionally, binds to DNA and alters its conformation. May be involved in regulation of gene expression, nucleoid organization and DNA protection. The chain is Nucleoid-associated protein Cagg_3200 from Chloroflexus aggregans (strain MD-66 / DSM 9485).